The chain runs to 43 residues: Hemolysin H3C (43 aa).

Methionine 1 carries the N-formylmethionine modification.

Belongs to the staphylococcal hemolytic protein family.

It localises to the secreted. In terms of biological role, virulence factor. Causes hemolysis of erythrocytes from sheep (HD(50)=2.63 mM), rabbit (HD(50)=2.37 mM), guinea pig (HD(50)=1.98 mM), dog (HD(50)=1.02 mM) and human (HD(50)=2.07 mM). Acts synergistically with beta-hemolysins from S.aureus ATCC 25923. Cytotoxic towards human dermal fibroblasts. This is Hemolysin H3C from Staphylococcus cohnii subsp. cohnii.